A 387-amino-acid chain; its full sequence is Acyltransferase MdmB (387 aa).

10 helical membrane passes run 8 to 28, 45 to 65, 85 to 105, 139 to 161, 170 to 190, 209 to 229, 236 to 256, 258 to 278, 292 to 312, and 336 to 356; these read LPSL…CHIA, ITTL…FVLA, IYPL…SLAE, TPSW…YRLV, WWCA…TSQF, CWLP…ALIL, GPGV…TQVV, PMFT…TALA, AVLV…FMVI, and ALAL…HTVV.

Belongs to the acyltransferase 3 family.

The protein localises to the cell membrane. Its function is as follows. Catalyzes the acylation of the mycaminose sugar during midecamycin biosynthesis. The sequence is that of Acyltransferase MdmB (mdmB) from Streptomyces mycarofaciens.